A 290-amino-acid polypeptide reads, in one-letter code: Phosphatidylglycerol--prolipoprotein diacylglyceryl transferase (290 aa).

7 consecutive transmembrane segments (helical) span residues 21-41 (VSLH…MWLA), 60-80 (LLYA…VLFY), 98-118 (GGMS…WFAH), 124-144 (FFQV…AGRL), 198-218 (SQLY…NLFI), 224-244 (IGSV…LVEF), and 258-278 (VISM…IMMA). An a 1,2-diacyl-sn-glycero-3-phospho-(1'-sn-glycerol)-binding site is contributed by R143.

The protein belongs to the Lgt family.

It is found in the cell inner membrane. It catalyses the reaction L-cysteinyl-[prolipoprotein] + a 1,2-diacyl-sn-glycero-3-phospho-(1'-sn-glycerol) = an S-1,2-diacyl-sn-glyceryl-L-cysteinyl-[prolipoprotein] + sn-glycerol 1-phosphate + H(+). It functions in the pathway protein modification; lipoprotein biosynthesis (diacylglyceryl transfer). Functionally, catalyzes the transfer of the diacylglyceryl group from phosphatidylglycerol to the sulfhydryl group of the N-terminal cysteine of a prolipoprotein, the first step in the formation of mature lipoproteins. This Sodalis glossinidius (strain morsitans) protein is Phosphatidylglycerol--prolipoprotein diacylglyceryl transferase.